The sequence spans 330 residues: Phosphate acyltransferase (330 aa).

It belongs to the PlsX family. Homodimer. Probably interacts with PlsY.

Its subcellular location is the cytoplasm. The enzyme catalyses a fatty acyl-[ACP] + phosphate = an acyl phosphate + holo-[ACP]. It participates in lipid metabolism; phospholipid metabolism. Catalyzes the reversible formation of acyl-phosphate (acyl-PO(4)) from acyl-[acyl-carrier-protein] (acyl-ACP). This enzyme utilizes acyl-ACP as fatty acyl donor, but not acyl-CoA. The protein is Phosphate acyltransferase of Streptococcus agalactiae serotype III (strain NEM316).